The following is a 287-amino-acid chain: Bifunctional protein FolD (287 aa).

NADP(+)-binding positions include 166-168 and Ile-232; that span reads GAS.

It belongs to the tetrahydrofolate dehydrogenase/cyclohydrolase family. As to quaternary structure, homodimer.

It carries out the reaction (6R)-5,10-methylene-5,6,7,8-tetrahydrofolate + NADP(+) = (6R)-5,10-methenyltetrahydrofolate + NADPH. The enzyme catalyses (6R)-5,10-methenyltetrahydrofolate + H2O = (6R)-10-formyltetrahydrofolate + H(+). Its pathway is one-carbon metabolism; tetrahydrofolate interconversion. In terms of biological role, catalyzes the oxidation of 5,10-methylenetetrahydrofolate to 5,10-methenyltetrahydrofolate and then the hydrolysis of 5,10-methenyltetrahydrofolate to 10-formyltetrahydrofolate. The sequence is that of Bifunctional protein FolD from Pectobacterium carotovorum subsp. carotovorum (strain PC1).